The sequence spans 377 residues: Dihydroorotate dehydrogenase (quinone) (377 aa).

FMN contacts are provided by residues A78–K82 and A102. Position 82 (K82) interacts with substrate. Residue N127–G130 coordinates substrate. FMN contacts are provided by N159 and N192. N192 is a substrate binding site. The active-site Nucleophile is S195. Position 197 (N197) interacts with substrate. 2 residues coordinate FMN: K230 and T258. Position 259–260 (N259–T260) interacts with substrate. FMN contacts are provided by residues G288, G317, and Y338–T339.

Belongs to the dihydroorotate dehydrogenase family. Type 2 subfamily. As to quaternary structure, monomer. It depends on FMN as a cofactor.

The protein localises to the cell membrane. It catalyses the reaction (S)-dihydroorotate + a quinone = orotate + a quinol. It participates in pyrimidine metabolism; UMP biosynthesis via de novo pathway; orotate from (S)-dihydroorotate (quinone route): step 1/1. Its function is as follows. Catalyzes the conversion of dihydroorotate to orotate with quinone as electron acceptor. In Rippkaea orientalis (strain PCC 8801 / RF-1) (Cyanothece sp. (strain PCC 8801)), this protein is Dihydroorotate dehydrogenase (quinone).